Here is a 187-residue protein sequence, read N- to C-terminus: Large ribosomal subunit protein uL5 (187 aa).

It belongs to the universal ribosomal protein uL5 family. Part of the 50S ribosomal subunit; part of the 5S rRNA/L5/L18/L25 subcomplex. Contacts the 5S rRNA and the P site tRNA. Forms a bridge to the 30S subunit in the 70S ribosome.

In terms of biological role, this is one of the proteins that bind and probably mediate the attachment of the 5S RNA into the large ribosomal subunit, where it forms part of the central protuberance. In the 70S ribosome it contacts protein S13 of the 30S subunit (bridge B1b), connecting the 2 subunits; this bridge is implicated in subunit movement. Contacts the P site tRNA; the 5S rRNA and some of its associated proteins might help stabilize positioning of ribosome-bound tRNAs. The protein is Large ribosomal subunit protein uL5 of Mycobacterium bovis (strain ATCC BAA-935 / AF2122/97).